We begin with the raw amino-acid sequence, 504 residues long: Histidine--tRNA ligase (504 aa).

It belongs to the class-II aminoacyl-tRNA synthetase family. In terms of assembly, homodimer.

Its subcellular location is the cytoplasm. It carries out the reaction tRNA(His) + L-histidine + ATP = L-histidyl-tRNA(His) + AMP + diphosphate + H(+). This chain is Histidine--tRNA ligase, found in Rhizobium rhizogenes (strain K84 / ATCC BAA-868) (Agrobacterium radiobacter).